The chain runs to 674 residues: DNA ligase (674 aa).

NAD(+)-binding positions include 34–38 (DAEYD), 84–85 (SL), and E116. K118 functions as the N6-AMP-lysine intermediate in the catalytic mechanism. Residues R139, E174, K291, and K315 each contribute to the NAD(+) site. Residues C409, C412, C425, and C430 each contribute to the Zn(2+) site. Residues 586–674 (REGEALKGLT…TGKDPRALTA (89 aa)) form the BRCT domain.

The protein belongs to the NAD-dependent DNA ligase family. LigA subfamily. Requires Mg(2+) as cofactor. Mn(2+) is required as a cofactor.

The catalysed reaction is NAD(+) + (deoxyribonucleotide)n-3'-hydroxyl + 5'-phospho-(deoxyribonucleotide)m = (deoxyribonucleotide)n+m + AMP + beta-nicotinamide D-nucleotide.. In terms of biological role, DNA ligase that catalyzes the formation of phosphodiester linkages between 5'-phosphoryl and 3'-hydroxyl groups in double-stranded DNA using NAD as a coenzyme and as the energy source for the reaction. It is essential for DNA replication and repair of damaged DNA. This Thermus sp. (strain AK16D) protein is DNA ligase.